The sequence spans 269 residues: Energy-coupling factor transporter ATP-binding protein EcfA1 (269 aa).

One can recognise an ABC transporter domain in the interval 8-242; the sequence is IVFKNVSFQY…AEELTTIGLD (235 aa). 42 to 49 is a binding site for ATP; it reads GHNGSGKS.

It belongs to the ABC transporter superfamily. Energy-coupling factor EcfA family. Forms a stable energy-coupling factor (ECF) transporter complex composed of 2 membrane-embedded substrate-binding proteins (S component), 2 ATP-binding proteins (A component) and 2 transmembrane proteins (T component).

Its subcellular location is the cell membrane. Functionally, ATP-binding (A) component of a common energy-coupling factor (ECF) ABC-transporter complex. Unlike classic ABC transporters this ECF transporter provides the energy necessary to transport a number of different substrates. The sequence is that of Energy-coupling factor transporter ATP-binding protein EcfA1 from Staphylococcus aureus (strain MRSA252).